Consider the following 304-residue polypeptide: Type II methyltransferase M.ScaI (304 aa).

Belongs to the N(4)/N(6)-methyltransferase family. N(4) subfamily.

It catalyses the reaction a 2'-deoxycytidine in DNA + S-adenosyl-L-methionine = an N(4)-methyl-2'-deoxycytidine in DNA + S-adenosyl-L-homocysteine + H(+). Functionally, a methylase that recognizes the double-stranded sequence 5'-AGTACT-3', methylates C-5 on both strands, and protects the DNA from cleavage by the ScaI endonuclease. The chain is Type II methyltransferase M.ScaI from Streptomyces caespitosus.